A 64-amino-acid polypeptide reads, in one-letter code: Large ribosomal subunit protein bL35 (64 aa).

A compositionally biased stretch (basic residues) spans 22-31; sequence GKVKHGHAYR. The tract at residues 22–64 is disordered; it reads GKVKHGHAYRSHLAQSKTTKQKRQSRKSTLMNNSDFKRLKKLI.

Belongs to the bacterial ribosomal protein bL35 family.

The chain is Large ribosomal subunit protein bL35 from Mesomycoplasma hyopneumoniae (strain 232) (Mycoplasma hyopneumoniae).